A 27-amino-acid polypeptide reads, in one-letter code: Trypsin inhibitor 5 (27 aa).

Intrachain disulfides connect Cys-1/Cys-18, Cys-8/Cys-20, and Cys-14/Cys-26.

It localises to the secreted. Its function is as follows. Inhibits trypsin. This Sechium edule (Chayote) protein is Trypsin inhibitor 5.